Here is a 731-residue protein sequence, read N- to C-terminus: NADH-ubiquinone oxidoreductase 75 kDa subunit, mitochondrial (731 aa).

The transit peptide at 1–27 directs the protein to the mitochondrion; that stretch reads MIRAPLVKALGALGSPTHQMASRAVRT. The 79-residue stretch at 40–118 folds into the 2Fe-2S ferredoxin-type domain; sequence EKIEVFVDDI…GWRIKTNSDL (79 aa). The [2Fe-2S] cluster site is built by Cys-74, Cys-85, Cys-88, and Cys-102. A 4Fe-4S His(Cys)3-ligated-type domain is found at 118–157; the sequence is LTRKAREGVMEFLLMNHPLDCPICDQGGECDLQDQAMAFG. Residues His-134, Cys-138, Cys-141, Cys-147, Cys-190, Cys-193, Cys-196, and Cys-240 each coordinate [4Fe-4S] cluster. The 57-residue stretch at 259 to 315 folds into the 4Fe-4S Mo/W bis-MGD-type domain; it reads IRKVSSIDVLDAVGSNIVVSTRTNEVLRILPRENEDVNEEWLADKSRFACDGLKRQR.

It belongs to the complex I 75 kDa subunit family. As to quaternary structure, complex I is composed of about 45 different subunits. [2Fe-2S] cluster is required as a cofactor. [4Fe-4S] cluster serves as cofactor.

It localises to the mitochondrion inner membrane. The catalysed reaction is a ubiquinone + NADH + 5 H(+)(in) = a ubiquinol + NAD(+) + 4 H(+)(out). Functionally, core subunit of the mitochondrial membrane respiratory chain NADH dehydrogenase (Complex I) that is believed to belong to the minimal assembly required for catalysis. Complex I functions in the transfer of electrons from NADH to the respiratory chain. The immediate electron acceptor for the enzyme is believed to be ubiquinone. This is the largest subunit of complex I and it is a component of the iron-sulfur (IP) fragment of the enzyme. It may form part of the active site crevice where NADH is oxidized. In Drosophila melanogaster (Fruit fly), this protein is NADH-ubiquinone oxidoreductase 75 kDa subunit, mitochondrial.